Reading from the N-terminus, the 1105-residue chain is Lysylphosphatidylglycerol biosynthesis bifunctional protein LysX (1105 aa).

The interval 1–603 is phosphatidylglycerol lysyltransferase; sequence MTVTKPRSVQ…LLHHDGSAPD (603 aa). Helical transmembrane passes span 20-40, 62-82, 86-106, 117-137, 154-174, 186-203, and 208-228; these read VPAA…LASI, FPDT…ALAA, IAWL…AADI, FGEN…VLGY, AVLV…VELF, YVAN…DLFT, and VFLN…ATIV. Positions 604–1105 are lysine--tRNA ligase; it reads VSGLRQSAIA…TLPFPLAKPH (502 aa). Residues Asp-1017 and Glu-1024 each contribute to the Mg(2+) site.

In the N-terminal section; belongs to the LPG synthetase family. It in the C-terminal section; belongs to the class-II aminoacyl-tRNA synthetase family. Mg(2+) serves as cofactor.

Its subcellular location is the cell membrane. It carries out the reaction tRNA(Lys) + L-lysine + ATP = L-lysyl-tRNA(Lys) + AMP + diphosphate. It catalyses the reaction L-lysyl-tRNA(Lys) + a 1,2-diacyl-sn-glycero-3-phospho-(1'-sn-glycerol) = a 1,2-diacyl-sn-glycero-3-phospho-1'-(3'-O-L-lysyl)-sn-glycerol + tRNA(Lys). In terms of biological role, catalyzes the production of L-lysyl-tRNA(Lys)transfer and the transfer of a lysyl group from L-lysyl-tRNA(Lys) to membrane-bound phosphatidylglycerol (PG), which produces lysylphosphatidylglycerol (LPG), one of the components of the bacterial membrane with a positive net charge. LPG synthesis contributes to the resistance to cationic antimicrobial peptides (CAMPs) and likely protects M.tuberculosis against the CAMPs produced by competiting microorganisms (bacteriocins). In fact, the modification of anionic phosphatidylglycerol with positively charged L-lysine results in repulsion of the peptides. The sequence is that of Lysylphosphatidylglycerol biosynthesis bifunctional protein LysX (lysX) from Mycobacterium marinum (strain ATCC BAA-535 / M).